The chain runs to 552 residues: Lysine--tRNA ligase (552 aa).

Residues Pro-71–Thr-79 carry the 'HIGH' region motif. A 'KMSKS' region motif is present at residues Lys-319–Ser-323. Lys-322 is a binding site for ATP.

The protein belongs to the class-I aminoacyl-tRNA synthetase family.

It localises to the cytoplasm. The enzyme catalyses tRNA(Lys) + L-lysine + ATP = L-lysyl-tRNA(Lys) + AMP + diphosphate. The sequence is that of Lysine--tRNA ligase from Caulobacter sp. (strain K31).